Reading from the N-terminus, the 273-residue chain is Large ribosomal subunit protein uL2cz/uL2cy (273 aa).

The tract at residues 224–273 (NPVDHPHGGGEGRAPIGRKKPATPWGYPALGRRSRKRNKYSDRFILRRRK) is disordered. Over residues 262–273 (KYSDRFILRRRK) the composition is skewed to basic and acidic residues.

This sequence belongs to the universal ribosomal protein uL2 family. In terms of assembly, part of the 50S ribosomal subunit.

The protein localises to the plastid. It is found in the chloroplast. The chain is Large ribosomal subunit protein uL2cz/uL2cy (rpl2-A) from Piper cenocladum (Ant piper).